The sequence spans 366 residues: Trans-enoyl reductase caaB (366 aa).

An Enoyl reductase (ER) domain is found at 19-363 (GAGQLSIYHD…RQTVSGHKLV (345 aa)). Position 219 (Tyr219) interacts with NADP(+).

It belongs to the zinc-containing alcohol dehydrogenase family. In terms of assembly, monomer.

It functions in the pathway secondary metabolite biosynthesis. Its function is as follows. Trans-enoyl reductase; part of the gene cluster that produces the acyltetronic acid derivatives carlosic acid, agglomerin F and carlosic acid methyl ether. The PKS domains of caaA condenses two malonyl-CoAs into an acetyl starter unit, and form 1,3-diketohexanyl-ACP with the help of the trans-enoyl reductase caaB. Next, the C domain of caaA forms the ester bond between the acyl chain and L-malic acid (derived from the TCA cycle) and accepted by the A domain instead of an amino acid. Finally, the terminal reductase/Dieckmann cyclization (R/DKC) domain cyclizes the intermediate and releases the product as carlosic acid. Decarboxylation of carlosic acid followed by formation of the exocyclic double bond is likely to be catalyzed by the cytochrome P450 monooxygenase caaC. Thus, decarboxylation and oxidation would be coupled (performed by one enzyme) through concomitant abstraction of the hydrogen at C-4. Finally, sequential oxidations of the terminal C-10 methyl group to form carboxylic acid would be catalyzed by the 2-oxoglutarate-dependent dioxygenase caaD, which is required for the biosynthesis of agglomerin F. This is Trans-enoyl reductase caaB from Aspergillus niger (strain ATCC MYA-4892 / CBS 513.88 / FGSC A1513).